Reading from the N-terminus, the 702-residue chain is Ribosomal RNA large subunit methyltransferase K/L (702 aa).

Residues 43–154 form the THUMP domain; it reads LVYQSLMWSR…KETASIALDL (112 aa).

It belongs to the methyltransferase superfamily. RlmKL family.

The protein resides in the cytoplasm. It catalyses the reaction guanosine(2445) in 23S rRNA + S-adenosyl-L-methionine = N(2)-methylguanosine(2445) in 23S rRNA + S-adenosyl-L-homocysteine + H(+). The catalysed reaction is guanosine(2069) in 23S rRNA + S-adenosyl-L-methionine = N(2)-methylguanosine(2069) in 23S rRNA + S-adenosyl-L-homocysteine + H(+). Functionally, specifically methylates the guanine in position 2445 (m2G2445) and the guanine in position 2069 (m7G2069) of 23S rRNA. This chain is Ribosomal RNA large subunit methyltransferase K/L, found in Escherichia coli O157:H7.